Consider the following 447-residue polypeptide: UDP-glycosyltransferase 76B1 (447 aa).

UDP-alpha-D-glucose-binding positions include Ser-269, 327 to 328, 345 to 353, and 367 to 370; these read WA, HCGWNSTLE, and FGDQ.

It belongs to the UDP-glycosyltransferase family. In terms of tissue distribution, expressed in roots, leaves, hydathodes, sepals and style.

Functionally, glycosylates the amino acid-related molecules isoleucic acid (2-hydroxy-3-methylpentanoic acid) and valic acid (2-hydroxy-3-methylbutyric acid). Acts as a negative regulator of salicylic acid (SA)-dependent plant defense in the absence of pathogens and promotes the jasmonate (JA) response. Negatively influences the onset of senescence. This is UDP-glycosyltransferase 76B1 from Arabidopsis thaliana (Mouse-ear cress).